We begin with the raw amino-acid sequence, 393 residues long: NAD(P)H-quinone oxidoreductase subunit H, chloroplastic (393 aa).

The protein belongs to the complex I 49 kDa subunit family. As to quaternary structure, NDH is composed of at least 16 different subunits, 5 of which are encoded in the nucleus.

Its subcellular location is the plastid. The protein localises to the chloroplast thylakoid membrane. The enzyme catalyses a plastoquinone + NADH + (n+1) H(+)(in) = a plastoquinol + NAD(+) + n H(+)(out). It catalyses the reaction a plastoquinone + NADPH + (n+1) H(+)(in) = a plastoquinol + NADP(+) + n H(+)(out). Its function is as follows. NDH shuttles electrons from NAD(P)H:plastoquinone, via FMN and iron-sulfur (Fe-S) centers, to quinones in the photosynthetic chain and possibly in a chloroplast respiratory chain. The immediate electron acceptor for the enzyme in this species is believed to be plastoquinone. Couples the redox reaction to proton translocation, and thus conserves the redox energy in a proton gradient. This chain is NAD(P)H-quinone oxidoreductase subunit H, chloroplastic, found in Vitis vinifera (Grape).